Here is a 476-residue protein sequence, read N- to C-terminus: Adenosylhomocysteinase (476 aa).

The substrate site is built by T62, D141, and E201. Residue 202-204 (TTT) coordinates NAD(+). Substrate is bound by residues K231 and D235. NAD(+) contacts are provided by residues N236, 265–270 (GYGDVG), E288, N323, 344–346 (IGH), and N389.

This sequence belongs to the adenosylhomocysteinase family. It depends on NAD(+) as a cofactor.

It localises to the cytoplasm. It carries out the reaction S-adenosyl-L-homocysteine + H2O = L-homocysteine + adenosine. It participates in amino-acid biosynthesis; L-homocysteine biosynthesis; L-homocysteine from S-adenosyl-L-homocysteine: step 1/1. In terms of biological role, may play a key role in the regulation of the intracellular concentration of adenosylhomocysteine. The protein is Adenosylhomocysteinase of Myxococcus xanthus (strain DK1622).